A 339-amino-acid chain; its full sequence is Phosphate acyltransferase (339 aa).

Belongs to the PlsX family. In terms of assembly, homodimer. Probably interacts with PlsY.

Its subcellular location is the cytoplasm. It catalyses the reaction a fatty acyl-[ACP] + phosphate = an acyl phosphate + holo-[ACP]. It functions in the pathway lipid metabolism; phospholipid metabolism. In terms of biological role, catalyzes the reversible formation of acyl-phosphate (acyl-PO(4)) from acyl-[acyl-carrier-protein] (acyl-ACP). This enzyme utilizes acyl-ACP as fatty acyl donor, but not acyl-CoA. The sequence is that of Phosphate acyltransferase from Methylococcus capsulatus (strain ATCC 33009 / NCIMB 11132 / Bath).